Here is a 219-residue protein sequence, read N- to C-terminus: Tegument protein UL14 (219 aa).

Residues 161 to 219 form a disordered region; it reads ANGPSRIGSHPTYTPTPTGPPGAPAAPLSRTPPSPAPPTGPATDPASASGFARDYPDGE. Residues 177–200 are compositionally biased toward pro residues; the sequence is PTGPPGAPAAPLSRTPPSPAPPTG.

This sequence belongs to the alphaherpesvirinae HHV-1 UL14 protein family. In terms of assembly, interacts with UL51. In terms of processing, phosphorylated.

The protein resides in the virion tegument. Its subcellular location is the host cytoplasm. It localises to the host nucleus. Contributes to the nuclear transport of the viral transcriptional activator VP16 during the early phase of infection. Therefore, participates indirectly in the regulation of the immediate-early gene expression. Additionally, seems to be important for efficient nuclear targeting of capsids. The UL51-UL14 complex regulates final viral envelopment for efficient viral replication. In Human herpesvirus 1 (strain 17) (HHV-1), this protein is Tegument protein UL14.